We begin with the raw amino-acid sequence, 371 residues long: GTPase Obg (371 aa).

Residues 1-159 form the Obg domain; the sequence is MKFLDQAKVY…KTIWLRLKLI (159 aa). An OBG-type G domain is found at 160-327; it reads ADAGLVGLPN…VLRALRDIIV (168 aa). GTP contacts are provided by residues 166-173, 191-195, 212-215, 279-282, and 308-310; these read GLPNAGKS, FTTLH, DIPG, SQID, and SAI. Mg(2+)-binding residues include serine 173 and threonine 193. The tract at residues 337–371 is disordered; the sequence is APMKALKVRHRDMQSSGNEGESEDNSDRDDEEQQG. Over residues 356–371 the composition is skewed to acidic residues; it reads GESEDNSDRDDEEQQG.

This sequence belongs to the TRAFAC class OBG-HflX-like GTPase superfamily. OBG GTPase family. In terms of assembly, monomer. Requires Mg(2+) as cofactor.

Its subcellular location is the cytoplasm. In terms of biological role, an essential GTPase which binds GTP, GDP and possibly (p)ppGpp with moderate affinity, with high nucleotide exchange rates and a fairly low GTP hydrolysis rate. Plays a role in control of the cell cycle, stress response, ribosome biogenesis and in those bacteria that undergo differentiation, in morphogenesis control. The protein is GTPase Obg of Rhizobium rhizogenes (strain K84 / ATCC BAA-868) (Agrobacterium radiobacter).